Here is a 239-residue protein sequence, read N- to C-terminus: Probable septum site-determining protein MinC (239 aa).

Belongs to the MinC family. Interacts with MinD and FtsZ.

Functionally, cell division inhibitor that blocks the formation of polar Z ring septums. Rapidly oscillates between the poles of the cell to destabilize FtsZ filaments that have formed before they mature into polar Z rings. Prevents FtsZ polymerization. This is Probable septum site-determining protein MinC from Colwellia psychrerythraea (strain 34H / ATCC BAA-681) (Vibrio psychroerythus).